The following is a 1107-amino-acid chain: DNA-directed RNA polymerase subunit beta (1107 aa).

Residues 1062 to 1075 show a composition bias toward basic and acidic residues; it reads DNEGNEKEKARELG. The tract at residues 1062–1081 is disordered; that stretch reads DNEGNEKEKARELGLDLPDN.

It belongs to the RNA polymerase beta chain family. As to quaternary structure, the RNAP catalytic core consists of 2 alpha, 1 beta, 1 beta' and 1 omega subunit. When a sigma factor is associated with the core the holoenzyme is formed, which can initiate transcription.

It carries out the reaction RNA(n) + a ribonucleoside 5'-triphosphate = RNA(n+1) + diphosphate. Its function is as follows. DNA-dependent RNA polymerase catalyzes the transcription of DNA into RNA using the four ribonucleoside triphosphates as substrates. The chain is DNA-directed RNA polymerase subunit beta from Syntrophomonas wolfei subsp. wolfei (strain DSM 2245B / Goettingen).